The sequence spans 336 residues: Cytoplasmic envelopment protein 2 (336 aa).

An interaction with host BBLF1 region spans residues K67–K69.

This sequence belongs to the herpesviridae cytoplasmic envelopment protein 2 family. As to quaternary structure, homodimer. Interacts with BBLF1. Interacts with the capsid. Interacts with BKRF4 (via C-terminus); this interaction is important for infectious virion production. Interacts with host TYK2; this interaction participates to the inhibition of host type I IFN signaling. Interacts with host STAT1; this interaction leads to STAT1 dephosphorylation and inhibition. Interacts with host STAT2; this interaction leads to STAT2 degradation. Interacts with host CUL1; this interaction might facilitate CUL1 recruitment to STAT2, leading to ubiquitination and degradation of the latter. Interacts with host AGO2; this interaction participates to the host miRNA regulation leading to enhanced SUMOylation.

Its subcellular location is the virion tegument. It localises to the host cytoplasm. The protein resides in the host nucleus. It is found in the host Golgi apparatus. The protein localises to the host trans-Golgi network. Plays a critical role in cytoplasmic virus egress. Participates in the final step of tegumentation and envelope acquisition within the host cytoplasm by directly interacting with the capsid. Upon virion binding to target cell, a signaling cascade is triggered to disrupt the interaction with the capsid, thereby preparing capsid uncoating. Activates the AP-1 pathway and enhances EBV reactivation and virus release. Inhibits type I IFN-induced TYK2, STAT1 and STAT3 phosphorylation, thereby impairing type I IFN signaling and counteracting the ability of IFN-alpha to suppress the reactivation of EBV. Recruits SHP1 phosphatase to dephosphorylate STAT1. Mediates STAT2 ubiquitination and proteasomal degradation. Also suppresses type II and type III IFN signaling. Contributes to G1/S arrest in the host cell. Acts as an miRNA regulator that interferes with the function of RISC in miRNA-mediated mRNA silencing. As a result, SUMOylation is increased. When encapsulated in the exosomes released by EBV-infected host cells, may facilitate the infection in recipient cells. The chain is Cytoplasmic envelopment protein 2 from Epstein-Barr virus (strain AG876) (HHV-4).